Reading from the N-terminus, the 157-residue chain is Probable Brix domain-containing ribosomal biogenesis protein (157 aa).

In terms of domain architecture, Brix spans 1–157 (MLVTTSRKPS…KFNIKGFKKY (157 aa)).

Probably involved in the biogenesis of the ribosome. The sequence is that of Probable Brix domain-containing ribosomal biogenesis protein from Methanosarcina mazei (strain ATCC BAA-159 / DSM 3647 / Goe1 / Go1 / JCM 11833 / OCM 88) (Methanosarcina frisia).